Consider the following 464-residue polypeptide: Arabinose-proton symporter (464 aa).

12 consecutive transmembrane segments (helical) span residues 21–43 (GFVI…DTAV), 63–85 (GLVI…FLSD), 92–111 (ILMT…ALSQ), 116–138 (LIIA…VTYI), 150–172 (LSSL…NLAV), 185–207 (GWRW…LLVV), 266–288 (ALVI…ITYY), 303–325 (GFVT…VLLI), 332–354 (KLMS…SFYF), 364–386 (VLIL…IMIS), 398–420 (AGIA…PMMI), and 424–446 (GLAY…VVTI).

It belongs to the major facilitator superfamily. Sugar transporter (TC 2.A.1.1) family.

It localises to the cell membrane. The enzyme catalyses L-arabinose(in) + H(+)(in) = L-arabinose(out) + H(+)(out). It carries out the reaction D-galactose(in) + H(+)(in) = D-galactose(out) + H(+)(out). It catalyses the reaction D-xylose(in) + H(+)(in) = D-xylose(out) + H(+)(out). In terms of biological role, uptake of L-arabinose across the cytoplasmic membrane with the concomitant transport of protons into the cell (symport system). In the presence of inducing amounts of L-arabinose, can import both D-galactose and D-xylose. Can also transport the disaccharide alpha-1,5-arabinobiose. The chain is Arabinose-proton symporter (araE) from Bacillus subtilis (strain 168).